The following is a 149-amino-acid chain: FKBP-type 16 kDa peptidyl-prolyl cis-trans isomerase (149 aa).

One can recognise a PPIase FKBP-type domain in the interval 2–72 (SESVQSNSAV…FSLEPDAAFG (71 aa)).

Belongs to the FKBP-type PPIase family.

It carries out the reaction [protein]-peptidylproline (omega=180) = [protein]-peptidylproline (omega=0). In terms of biological role, PPIases accelerate the folding of proteins. Substrate specificity carried out with 'Suc-Ala-Xaa-Pro-Phe-4-nitroanilide', where Xaa is the amino acid tested, was found to be Phe &gt; Leu &gt;&gt; Ile &gt; Lys = Ala &gt; Trp &gt; His &gt;&gt; Gln. This chain is FKBP-type 16 kDa peptidyl-prolyl cis-trans isomerase (fkpB), found in Escherichia coli O6:H1 (strain CFT073 / ATCC 700928 / UPEC).